Reading from the N-terminus, the 923-residue chain is MTELQAKDPRTLHTSGAAPSPTHVGSPLLARLDPDPFQGSQHSDASSVVSPIPISLDRLLFSRSCQAQELPDEKTQNQQSLSDVEGAFSGVEASRRRSRNPRAPEKDSRLLDSVLDTLLAPSGPEQSQTSPPACEAITSWCLFGPELPEDPRSVPATKGLLSPLMSRPESKAGDSSGTGAGQKVLPKAVSPPRQLLLPTSGSAHWPGAGVKPSQQPATVEVEEDGGLETEGSAGPLLKSKPRALEGMCSGGGVTANAPGAAPGGVTLVPKEDSRFSAPRVSLEQDAPVAPGRSPLATTVVDFIHVPILPLNHALLAARTRQLLEGDSYDGGAAAQVPFAPPRGSPSAPSPPVPCGDFPDCTYPPEGDPKEDGFPVYGEFQPPGLKIKEEEEGTEAASRSPRPYLLAGASAATFPDFPLPPRPPRAPPSRPGEAAVAAPSAAVSPVSSSGSALECILYKAEGAPPTQGSFAPLPCKPPAASSCLLPRDSLPAAPTSSAAPAIYPPLGLNGLPQLGYQAAVLKDSLPQVYPPYLNYLRPDSEASQSPQYGFDSLPQKICLICGDEASGCHYGVLTCGSCKVFFKRAMEGQHNYLCAGRNDCIVDKIRRKNCPACRLRKCCQAGMVLGGRKFKKFNKVRVMRALDGVALPQSVAFPNESQTLGQRITFSPNQEIQLVPPLINLLMSIEPDVVYAGHDNTKPDTSSSLLTSLNQLGERQLLSVVKWSKSLPGFRNLHIDDQITLIQYSWMSLMVFGLGWRSYKHVSGQMLYFAPDLILNEQRMKELSFYSLCLTMWQIPQEFVKLQVTHEEFLCMKVLLLLNTIPLEGLRSQSQFEEMRSSYIRELIKAIGLRQKGVVPSSQRFYQLTKLLDSLHDLVKQLHLYCLNTFIQSRALAVEFPEMMSEVIAAQLPKILAGMVKPLLFHKK.

Basic and acidic residues predominate over residues 1 to 11 (MTELQAKDPRT). Residues 1–49 (MTELQAKDPRTLHTSGAAPSPTHVGSPLLARLDPDPFQGSQHSDASSVV) are disordered. The tract at residues 1-164 (MTELQAKDPR…PATKGLLSPL (164 aa)) is AF3; mediates transcriptional activation (in isoform B). A modulating, Pro-Rich region spans residues 1–556 (MTELQAKDPR…YGFDSLPQKI (556 aa)). Residue Lys-7 forms a Glycyl lysine isopeptide (Lys-Gly) (interchain with G-Cter in SUMO) linkage. The residue at position 20 (Ser-20) is a Phosphoserine. Over residues 38–49 (QGSQHSDASSVV) the composition is skewed to polar residues. The LXXL motif 1 signature appears at 56-60 (LDRLL). The interval 67–111 (AQELPDEKTQNQQSLSDVEGAFSGVEASRRRSRNPRAPEKDSRLL) is disordered. Ser-82 carries the phosphoserine modification. The LXXL motif 2 motif lies at 115-119 (LDTLL). A phosphoserine mark is found at Ser-130 and Ser-162. The disordered stretch occupies residues 152–239 (RSVPATKGLL…EGSAGPLLKS (88 aa)). The interval 165-304 (MSRPESKAGD…LATTVVDFIH (140 aa)) is mediates transcriptional transrepression (in isoform A). The Nuclear localization signal signature appears at 184–188 (VLPKA). Residues Ser-190 and Ser-213 each carry the phosphoserine modification. Ser-293 carries the phosphoserine; by MAPK1 modification. The interval 333–371 (AAQVPFAPPRGSPSAPSPPVPCGDFPDCTYPPEGDPKED) is disordered. Residues 338–353 (FAPPRGSPSAPSPPVP) are compositionally biased toward pro residues. Ser-344 carries the post-translational modification Phosphoserine; by MAPK. Lys-387 is covalently cross-linked (Glycyl lysine isopeptide (Lys-Gly) (interchain with G-Cter in SUMO); alternate). Residue Lys-387 forms a Glycyl lysine isopeptide (Lys-Gly) (interchain with G-Cter in ubiquitin); alternate linkage. Ser-399 is subject to Phosphoserine; by CDK2. The segment at 412-435 (TFPDFPLPPRPPRAPPSRPGEAAV) is disordered. Residues 416–429 (FPLPPRPPRAPPSR) are compositionally biased toward pro residues. The segment at 450–536 (SALECILYKA…VYPPYLNYLR (87 aa)) is AF1; mediates transcriptional activation. Residue Lys-521 forms a Glycyl lysine isopeptide (Lys-Gly) (interchain with G-Cter in SUMO) linkage. 2 NR C4-type zinc fingers span residues 557-577 (CLIC…CGSC) and 593-617 (CAGR…LRKC). The segment at residues 557–629 (CLICGDEASG…AGMVLGGRKF (73 aa)) is a DNA-binding region (nuclear receptor). Ser-666 bears the Phosphoserine mark. Positions 669 to 903 (QEIQLVPPLI…EFPEMMSEVI (235 aa)) constitute an NR LBD domain. The interval 677–923 (LINLLMSIEP…MVKPLLFHKK (247 aa)) is AF2; mediates transcriptional activation. Arg-756 contributes to the progesterone binding site.

It belongs to the nuclear hormone receptor family. NR3 subfamily. Interacts with SMARD1 and UNC45A. Interacts with CUEDC2; the interaction promotes ubiquitination, decreases sumoylation, and represses transcriptional activity. Interacts with PIAS3; the interaction promotes sumoylation of PR in a hormone-dependent manner, inhibits DNA-binding, and alters nuclear export. Interacts with SP1; the interaction requires ligand-induced phosphorylation on Ser-344. Interacts with PRMT2. Isoform A interacts with NCOR2. Isoform B (but not isoform A) interacts with NCOA2 and NCOA1. Isoform B (but not isoform A) interacts with KLF9. Interacts with GTF2B. Phosphorylated on multiple serine sites. Several of these sites are hormone-dependent. Phosphorylation on Ser-293 is highly hormone-dependent and modulates ubiquitination and sumoylation on Lys-387. Phosphorylation on Ser-344 also requires induction by hormone. Basal phosphorylation on Ser-82, Ser-190 and Ser-399 is increased in response to progesterone and can be phosphorylated in vitro by the CDK2-A1 complex. Increased levels of phosphorylation on Ser-399 also in the presence of EGF, heregulin, IGF, PMA and FBS. Phosphorylation at this site by CDK2 is ligand-independent, and increases nuclear translocation and transcriptional activity. Phosphorylation at Ser-293, but not at Ser-190, is impaired during the G(2)/M phase of the cell cycle. Phosphorylation on Ser-344 by ERK1/2 MAPK is required for interaction with SP1. Post-translationally, sumoylation is hormone-dependent and represses transcriptional activity. Sumoylation on all three sites is enhanced by PIAS3. Desumoylated by SENP1. Sumoylation on Lys-387, the main site of sumoylation, is repressed by ubiquitination on the same site, and modulated by phosphorylation at Ser-293. In terms of processing, ubiquitination is hormone-dependent and represses sumoylation on the same site. Promoted by MAPK-mediated phosphorylation on Ser-293. Ubiquitinated by UBR5, leading to its degradation: UBR5 specifically recognizes and binds ligand-bound PGR when it is not associated with coactivators (NCOAs). In presence of NCOAs, the UBR5-degron is not accessible, preventing its ubiquitination and degradation. Palmitoylated by ZDHHC7 and ZDHHC21. Palmitoylation is required for plasma membrane targeting and for rapid intracellular signaling via ERK and AKT kinases and cAMP generation. In terms of tissue distribution, isoform A and isoform B are expressed in the pituitary.

The protein localises to the nucleus. The protein resides in the cytoplasm. Its function is as follows. The steroid hormones and their receptors are involved in the regulation of eukaryotic gene expression and affect cellular proliferation and differentiation in target tissues. Depending on the isoform, progesterone receptor functions as a transcriptional activator or repressor. Functionally, ligand-dependent transdominant repressor of steroid hormone receptor transcriptional activity including repression of its isoform B, MR and ER. Transrepressional activity may involve recruitment of corepressor NCOR2. In terms of biological role, transcriptional activator of several progesteron-dependent promoters in a variety of cell types. Involved in activation of SRC-dependent MAPK signaling on hormone stimulation. This Rattus norvegicus (Rat) protein is Progesterone receptor (Pgr).